The chain runs to 298 residues: MAGDLTPSLFLKYGFGGALSCSITHSLVVPLDVVKTLLQTNPGKYTGMMNGFSTVIKEQGPSGLLQGLGPTAVGYALQGFLKFGFYEVFKKTYADAVGEKADQFRIPIWLAASATAEVIADIALCPNEAVRIRLVAEPTFAKSPVEAFGKIFKQEGVLGFYKGLPPILLKQVPYTMAKFAVFEFTAENVYKGLAASGKPKESLTDGQKLSVSLGSGIVAGIVAAIVSQPADTILSKINQEKTDGGVVKAIGNIMRRLGVRGLFLGLPTRCFMVGTLTAGQFFIYDGIKQMLGLTPAKK.

Residues 1 to 13 lie on the Mitochondrial intermembrane side of the membrane; sequence MAGDLTPSLFLKY. Solcar repeat units lie at residues 8–92, 104–188, and 207–290; these read SLFL…FKKT, FRIP…TAEN, and QKLS…IKQM. The helical transmembrane segment at 14-34 threads the bilayer; the sequence is GFGGALSCSITHSLVVPLDVV. Over 35–60 the chain is Mitochondrial matrix; it reads KTLLQTNPGKYTGMMNGFSTVIKEQG. Residues 61-81 traverse the membrane as a helical segment; sequence PSGLLQGLGPTAVGYALQGFL. The Mitochondrial intermembrane portion of the chain corresponds to 82–105; it reads KFGFYEVFKKTYADAVGEKADQFR. The helical transmembrane segment at 106 to 126 threads the bilayer; sequence IPIWLAASATAEVIADIALCP. Over 127–162 the chain is Mitochondrial matrix; that stretch reads NEAVRIRLVAEPTFAKSPVEAFGKIFKQEGVLGFYK. The helical transmembrane segment at 163–179 threads the bilayer; it reads GLPPILLKQVPYTMAKF. Residues 180–208 are Mitochondrial intermembrane-facing; that stretch reads AVFEFTAENVYKGLAASGKPKESLTDGQK. Residues 209 to 229 traverse the membrane as a helical segment; that stretch reads LSVSLGSGIVAGIVAAIVSQP. The Mitochondrial matrix portion of the chain corresponds to 230-262; that stretch reads ADTILSKINQEKTDGGVVKAIGNIMRRLGVRGL. Residues 263–283 traverse the membrane as a helical segment; the sequence is FLGLPTRCFMVGTLTAGQFFI. Over 284 to 298 the chain is Mitochondrial intermembrane; that stretch reads YDGIKQMLGLTPAKK.

Belongs to the mitochondrial carrier (TC 2.A.29) family.

Its subcellular location is the mitochondrion inner membrane. In terms of biological role, mitochondrial solute carriers shuttle metabolites, nucleotides, and cofactors through the mitochondrial inner membrane. Transports phosphate groups from the cytosol to the mitochondrial matrix. Phosphate is cotransported with H(+). The protein is Mitochondrial substrate carrier family protein N (mcfN) of Dictyostelium discoideum (Social amoeba).